The chain runs to 148 residues: SPbeta prophage-derived uncharacterized protein YomK (148 aa).

A run of 2 helical transmembrane segments spans residues 72–92 (WGIG…LFGV) and 104–124 (NALI…RNII).

The protein resides in the cell membrane. The sequence is that of SPbeta prophage-derived uncharacterized protein YomK (yomK) from Bacillus subtilis (strain 168).